The primary structure comprises 463 residues: ATP-dependent protease ATPase subunit HslU (463 aa).

ATP-binding positions include I19 and 61–66 (GVGKTE). Residues 154 to 174 (FGGAQNSSQTSDTQEDGEIEK) are disordered. D277, E341, and R413 together coordinate ATP.

It belongs to the ClpX chaperone family. HslU subfamily. A double ring-shaped homohexamer of HslV is capped on each side by a ring-shaped HslU homohexamer. The assembly of the HslU/HslV complex is dependent on binding of ATP.

It is found in the cytoplasm. In terms of biological role, ATPase subunit of a proteasome-like degradation complex; this subunit has chaperone activity. The binding of ATP and its subsequent hydrolysis by HslU are essential for unfolding of protein substrates subsequently hydrolyzed by HslV. HslU recognizes the N-terminal part of its protein substrates and unfolds these before they are guided to HslV for hydrolysis. The chain is ATP-dependent protease ATPase subunit HslU from Bacillus cereus (strain G9842).